The following is a 491-amino-acid chain: Katanin p60 ATPase-containing subunit A1 (491 aa).

An interaction with KATNB1 region spans residues 1-29 (MSLLMISENVKLAREYALLGNYDSAMVYY). Residues 1 to 75 (MSLLMISENV…VKDIMKTLES (75 aa)) form an interaction with dynein and NDEL1 region. The interval 1–185 (MSLLMISENV…EPETNKFDST (185 aa)) is interaction with microtubules. A phosphoserine; by DYRK2 mark is found at S42 and S109. A disordered region spans residues 87–185 (QHDLPASEGE…EPETNKFDST (99 aa)). Position 133 is a phosphothreonine; by DYRK2 (T133). Over residues 145-169 (HNDRGKAVRCREKKEQNKGREEKNK) the composition is skewed to basic and acidic residues. At S170 the chain carries Phosphoserine. 249-256 (GPPGTGKT) is an ATP binding site.

The protein belongs to the AAA ATPase family. Katanin p60 subunit A1 subfamily. In terms of assembly, can homooligomerize into hexameric rings, which may be promoted by interaction with microtubules. Interacts with KATNB1, which may serve as a targeting subunit. Interacts with ASPM; the katanin complex formation KATNA1:KATNB1 is required for the association of ASPM Interacts with dynein and NDEL1. Associates with the E3 ligase complex containing DYRK2, EDD/UBR5, DDB1 and DCAF1 proteins (EDVP complex). Interacts with KLHL42 (via the kelch domains). Interacts with CUL3; the interaction is enhanced by KLHL42. Interacts with KATNB1 and KATNBL1. Interacts with CAMSAP2 and CAMSAP3; leading to regulate the length of CAMSAP-decorated microtubule stretches. Post-translationally, phosphorylation by DYRK2 triggers ubiquitination and subsequent degradation. In terms of processing, ubiquitinated by the BCR(KLHL42) E3 ubiquitin ligase complex, leading to its proteasomal degradation. Ubiquitinated by the EDVP E3 ligase complex and subsequently targeted for proteasomal degradation.

Its subcellular location is the cytoplasm. The protein localises to the midbody. It is found in the cytoskeleton. It localises to the microtubule organizing center. The protein resides in the centrosome. Its subcellular location is the spindle pole. The protein localises to the spindle. The catalysed reaction is n ATP + n H2O + a microtubule = n ADP + n phosphate + (n+1) alpha/beta tubulin heterodimers.. With respect to regulation, ATPase activity is stimulated by microtubules, which promote homooligomerization. ATP-dependent microtubule severing is stimulated by interaction with KATNB1. Catalytic subunit of a complex which severs microtubules in an ATP-dependent manner. Microtubule severing may promote rapid reorganization of cellular microtubule arrays and the release of microtubules from the centrosome following nucleation. Microtubule release from the mitotic spindle poles may allow depolymerization of the microtubule end proximal to the spindle pole, leading to poleward microtubule flux and poleward motion of chromosome. Microtubule release within the cell body of neurons may be required for their transport into neuronal processes by microtubule-dependent motor proteins. This transport is required for axonal growth. This is Katanin p60 ATPase-containing subunit A1 from Macaca fascicularis (Crab-eating macaque).